Here is a 450-residue protein sequence, read N- to C-terminus: MSMEFDAVIIGGGVSGCATFYTLSEYSSLKRVAIVEKCSKLAQISSSAKANSQTIHDGSIETNYTPEKAKKVRLSAYKTRQYALNKGLQNEVIFETQKMAIGVGDEECEFMKKRYESFKEIFVGLEEFDKQKIKELEPNVILGANGIDRHENIIGHGYRKDWSTMNFAKLSENFVEEALKLKPNNQVFLNFKVKKIEKRNDTYAVISEDAEEVYAKFVLVNAGSYALPLAQSMGYGLDLGCLPVAGSFYFVPDLLRGKVYTVQNPKLPFAAVHGDPDAVIKGKTRIGPTALTMPKLERNKCWLKGISLELLKMDLNKDVFKIAFDLMSDKEIRNYVFKNMVFELPIIGKRKFLKDAQKIIPSLSLEDLEYAHGFGEVRPQVLDRTKRKLELGEKKICTHKGITFNMTPSPGATSCLQNALVDSQEIAAYLGESFELERFYKDLSPEELEN.

It belongs to the MQO family. FAD serves as cofactor.

The protein resides in the cell membrane. The catalysed reaction is (S)-malate + a quinone = a quinol + oxaloacetate. The protein operates within carbohydrate metabolism; tricarboxylic acid cycle; oxaloacetate from (S)-malate (quinone route): step 1/1. In terms of biological role, catalyzes oxidation of malate to oxaloacetate in the citric acid cycle. Donates electrons to quinones of the electron transfer chain. This chain is Malate:quinone oxidoreductase (mqo), found in Helicobacter pylori (strain ATCC 700392 / 26695) (Campylobacter pylori).